The following is a 118-amino-acid chain: Large ribosomal subunit protein bL20 (118 aa).

Belongs to the bacterial ribosomal protein bL20 family.

Binds directly to 23S ribosomal RNA and is necessary for the in vitro assembly process of the 50S ribosomal subunit. It is not involved in the protein synthesizing functions of that subunit. The sequence is that of Large ribosomal subunit protein bL20 from Erwinia tasmaniensis (strain DSM 17950 / CFBP 7177 / CIP 109463 / NCPPB 4357 / Et1/99).